A 64-amino-acid chain; its full sequence is Large ribosomal subunit protein bL35 (64 aa).

A disordered region spans residues 22–44 (IMKQQAGMRHNLEVKSSKRKARL).

It belongs to the bacterial ribosomal protein bL35 family.

This chain is Large ribosomal subunit protein bL35, found in Clavibacter sepedonicus (Clavibacter michiganensis subsp. sepedonicus).